The chain runs to 96 residues: Toxin ParE1 (96 aa).

The protein belongs to the RelE toxin family. In terms of assembly, forms a ParD1(2)-ParE1(2) heterotetramer.

Toxic component of a type II toxin-antitoxin (TA) system. Its toxic effect is neutralized by coexpression with cognate antitoxin ParD1 but no other ParD or RelB antitoxin. Low levels of wild-type toxin in the absence of antitoxin decreases the rate of cell growth, and results in death or loss of colony formation abilities and greatly elongated cells. Low levels of a mutant missing the last 4 residues leads to loss of cell division while cell elongation continues. The polypeptide is Toxin ParE1 (parE1) (Caulobacter vibrioides (strain ATCC 19089 / CIP 103742 / CB 15) (Caulobacter crescentus)).